The following is a 294-amino-acid chain: Protease HtpX (294 aa).

2 consecutive transmembrane segments (helical) span residues 4–24 (IALFLLTNLAVMVVFGLVLSL) and 34–52 (GLLIMALLFGFGGSIVSLM). Zn(2+) is bound at residue histidine 139. Glutamate 140 is a catalytic residue. Zn(2+) is bound at residue histidine 143. Helical transmembrane passes span 158-178 (VVNTFVIFISRVIAQIAAGFL) and 194-214 (LIYFAVATVLELVFGILASII). Position 223 (glutamate 223) interacts with Zn(2+).

The protein belongs to the peptidase M48B family. It depends on Zn(2+) as a cofactor.

It localises to the cell inner membrane. This Klebsiella pneumoniae subsp. pneumoniae (strain ATCC 700721 / MGH 78578) protein is Protease HtpX.